Reading from the N-terminus, the 187-residue chain is Large ribosomal subunit protein uL13 (187 aa).

This sequence belongs to the universal ribosomal protein uL13 family.

This is Large ribosomal subunit protein uL13 (rpl13a) from Dictyostelium discoideum (Social amoeba).